Reading from the N-terminus, the 196-residue chain is MEEMDLNHPLKESIVFSHKMALLSKALWKSVEKDWQAWIKPFHLNLNEHHILWIAYQLNGATISDIASHGVMHVSTAFNFSKKLEARGLLSFSKKKDDKRNTYICLTDSGRQLFLETMRAFNEHTYHVYQGAVPMKELYGKFPEFSELICIVRHIYGTEFIEQFDACLTDFQNDVEEKDGHLKLASANLFPLQPAK.

The region spanning 13–157 (SIVFSHKMAL…LICIVRHIYG (145 aa)) is the HTH marR-type domain. A DNA-binding region (H-T-H motif) is located at residues 63-86 (ISDIASHGVMHVSTAFNFSKKLEA).

In terms of assembly, homodimer.

Negative regulator of protease production and sporulation. This is HTH-type transcriptional regulator Hpr from Shouchella clausii (strain KSM-K16) (Alkalihalobacillus clausii).